The primary structure comprises 160 residues: Cytochrome b6-f complex subunit 4 (160 aa).

A run of 3 helical transmembrane segments spans residues 36–56, 95–115, and 131–151; these read LLYI…GLAI, LLGV…PFLE, and TVFL…TLPI.

The protein belongs to the cytochrome b family. PetD subfamily. As to quaternary structure, the 4 large subunits of the cytochrome b6-f complex are cytochrome b6, subunit IV (17 kDa polypeptide, petD), cytochrome f and the Rieske protein, while the 4 small subunits are petG, petL, petM and petN. The complex functions as a dimer.

The protein localises to the plastid. Its subcellular location is the chloroplast thylakoid membrane. Functionally, component of the cytochrome b6-f complex, which mediates electron transfer between photosystem II (PSII) and photosystem I (PSI), cyclic electron flow around PSI, and state transitions. The chain is Cytochrome b6-f complex subunit 4 from Acorus calamus (Sweet flag).